A 334-amino-acid chain; its full sequence is Beta-hexosaminidase (334 aa).

Substrate contacts are provided by residues aspartate 60, arginine 68, arginine 133, and 163–164 (KH). Histidine 176 acts as the Proton donor/acceptor in catalysis. The active-site Nucleophile is aspartate 247.

This sequence belongs to the glycosyl hydrolase 3 family. NagZ subfamily.

The protein localises to the cytoplasm. The enzyme catalyses Hydrolysis of terminal non-reducing N-acetyl-D-hexosamine residues in N-acetyl-beta-D-hexosaminides.. It participates in cell wall biogenesis; peptidoglycan recycling. In terms of biological role, plays a role in peptidoglycan recycling by cleaving the terminal beta-1,4-linked N-acetylglucosamine (GlcNAc) from peptide-linked peptidoglycan fragments, giving rise to free GlcNAc, anhydro-N-acetylmuramic acid and anhydro-N-acetylmuramic acid-linked peptides. In Xanthomonas axonopodis pv. citri (strain 306), this protein is Beta-hexosaminidase.